The primary structure comprises 383 residues: LIM/homeobox protein Lhx3 (383 aa).

LIM zinc-binding domains are found at residues 14 to 73 (PLCA…RFGT) and 73 to 136 (TKCA…AKQR). Threonine 48 is subject to Phosphothreonine. Serine 56 carries the phosphoserine modification. The homeobox DNA-binding region spans 142 to 201 (AKRPRTTITAKQLETLKSAYNTSPKPARHVREQLSSETGLDMRVVQVWFQNRRAKEKRLK). The interval 197 to 383 (EKRLKKDAGR…WLDEVDHAQF (187 aa)) is disordered. The residue at position 212 (tyrosine 212) is a Phosphotyrosine. Residue serine 223 is modified to Phosphoserine. Low complexity predominate over residues 307-334 (PAALQSLPGPQPLLSSLVYPEAGLGLVP). The segment covering 335–344 (AGPPGGPPPM) has biased composition (pro residues).

In terms of assembly, interacts with POU1F1. At neuronal promoters, interacts with LDB1, in motor neurons LDB1 is displaced by ISL1 and a ternary complex is formed in which ISL1 contacts both LHX3 and LDB1; allosteric structural changes in the DNA binding domain of LHX3, induced by the ISL1-LHX3 interaction, may explain differences in sequence specificity of the different complexes. Interacts with LDB2. May interact with CITED2/MRG1.

It is found in the nucleus. Functionally, transcription factor. Recognizes and binds to the consensus sequence motif 5'-AATTAATTA-3' in the regulatory elements of target genes, such as glycoprotein hormones alpha chain CGA and visual system homeobox CHX10, positively modulating transcription; transcription can be co-activated by LDB2. Synergistically enhances transcription from the prolactin promoter in cooperation with POU1F1/Pit-1. Required for the establishment of the specialized cells of the pituitary gland and the nervous system. Involved in the development of interneurons and motor neurons in cooperation with LDB1 and ISL1. This is LIM/homeobox protein Lhx3 (LHX3) from Sus scrofa (Pig).